The sequence spans 1136 residues: Probable phospholipid-transporting ATPase IIB (1136 aa).

Residues 1–145 (MADQIPLYPV…IKNQKYNIFT (145 aa)) are Cytoplasmic-facing. Residues 146–166 (FIPGVLYEQFKFFLNLYFLIV) traverse the membrane as a helical segment. Topologically, residues 167–174 (SCSQFVPA) are extracellular. Residues 175 to 195 (LKIGYLYTYWAPLGFVLAVTI) traverse the membrane as a helical segment. The Cytoplasmic segment spans residues 196-383 (MREAVDEFRR…LDLELNQLTK (188 aa)). Residues 384 to 404 (ALFLALVALSVVMVTLQGFAG) traverse the membrane as a helical segment. Residues 405 to 408 (PWYR) are Extracellular-facing. A helical membrane pass occupies residues 409 to 429 (SLFRFLLLFSYIIPISLRVNL). The Cytoplasmic segment spans residues 430–939 (DMGKAAYGWM…ALGQFVMHRG (510 aa)). Residue aspartate 469 is the 4-aspartylphosphate intermediate of the active site. Aspartate 469, lysine 470, and threonine 471 together coordinate ATP. Aspartate 469 is a Mg(2+) binding site. Residue threonine 471 coordinates Mg(2+). The interval 514–538 (AGGSSAASTPPRKAPSSAPKVRRSV) is disordered. 11 residues coordinate ATP: glutamate 591, phenylalanine 633, lysine 638, lysine 657, arginine 686, threonine 687, threonine 766, glycine 767, aspartate 768, arginine 848, and lysine 854. Aspartate 874 is a binding site for Mg(2+). Residues asparagine 877 and aspartate 878 each contribute to the ATP site. Position 878 (aspartate 878) interacts with Mg(2+). The helical transmembrane segment at 940–960 (LIISTMQAVFSSVFYFASVPL) threads the bilayer. The Extracellular portion of the chain corresponds to 961–962 (YQ). Residues 963 to 983 (GFLMVGYATVYTMFPVFSLVL) traverse the membrane as a helical segment. The Cytoplasmic portion of the chain corresponds to 984–1012 (DQDVKPEMAMLYPELYKDLTKGRSLSFKT). A helical transmembrane segment spans residues 1013-1033 (FLVWVLISIYQGGILMFGALV). The Extracellular segment spans residues 1034–1041 (LFESEFVH). Residues 1042-1062 (VVAISFTALVLTELLMVALTV) form a helical membrane-spanning segment. Residues 1063–1066 (RTWH) lie on the Cytoplasmic side of the membrane. A helical transmembrane segment spans residues 1067 to 1087 (WLMVVAQLLSLGCYVASLAFL). The Extracellular segment spans residues 1088-1098 (NEYFDVAFITT). The chain crosses the membrane as a helical span at residues 1099-1119 (VTFVWKVSAITVVSCLPLYVL). Topologically, residues 1120 to 1136 (KYLKRKLSPPSYSKLSS) are cytoplasmic.

The protein belongs to the cation transport ATPase (P-type) (TC 3.A.3) family. Type IV subfamily. It depends on Mg(2+) as a cofactor.

Its subcellular location is the golgi apparatus. It localises to the trans-Golgi network membrane. It carries out the reaction ATP + H2O + phospholipidSide 1 = ADP + phosphate + phospholipidSide 2.. In Bos taurus (Bovine), this protein is Probable phospholipid-transporting ATPase IIB (ATP9B).